A 222-amino-acid polypeptide reads, in one-letter code: Pectate lyase A (222 aa).

Residues 1 to 25 (MKKMLTLLLSAGLVASIFGVMPAAA) form the signal peptide.

It belongs to the polysaccharide lyase 3 family. Ca(2+) is required as a cofactor.

It is found in the secreted. The enzyme catalyses Eliminative cleavage of (1-&gt;4)-alpha-D-galacturonan to give oligosaccharides with 4-deoxy-alpha-D-galact-4-enuronosyl groups at their non-reducing ends.. The catalysed reaction is Eliminative cleavage of (1-&gt;4)-alpha-D-galacturonan methyl ester to give oligosaccharides with 4-deoxy-6-O-methyl-alpha-D-galact-4-enuronosyl groups at their non-reducing ends.. Its pathway is glycan metabolism; pectin degradation; 2-dehydro-3-deoxy-D-gluconate from pectin: step 2/5. With respect to regulation, strongly inhibited by Ba(2+). To a lesser extent, is also inhibited by Sn(2+), Mg(2+) and Ag(+). Inhibited by EDTA in vitro. In terms of biological role, catalyzes the depolymerization of both polygalacturonate and pectins of methyl esterification degree from 22 to 89%, with an endo mode of action. In contrast to the majority of pectate lyases, displays high activity on highly methylated pectins. Is not able to cleave trigalacturonate. Does not degrade xylans and carboxymethylcellulose (CMC). This is Pectate lyase A (pelA) from Paenibacillus barcinonensis.